Here is a 420-residue protein sequence, read N- to C-terminus: Zinc finger and BTB domain-containing protein 42 (420 aa).

Residues 24-92 (CDCTVLVGDA…MYEGRLDLHS (69 aa)) form the BTB domain. Disordered regions lie at residues 174-204 (PPSW…HPPC) and 216-248 (QGAQ…PPVC). A compositionally biased stretch (low complexity) spans 227–241 (DSFSEQDSSSPQSAD). 4 consecutive C2H2-type zinc fingers follow at residues 292-314 (CICP…LSAH), 332-354 (PTCP…ERTH), 360-382 (YTCV…AVVH), and 388-411 (HACR…RKFH).

Belongs to the krueppel C2H2-type zinc-finger protein family. ZBTB18 subfamily.

It is found in the cytoplasm. The protein localises to the nucleus. The protein resides in the nucleoplasm. In terms of biological role, transcriptional repressor. Specifically binds DNA and probably acts by recruiting chromatin remodeling multiprotein complexes. This Rattus norvegicus (Rat) protein is Zinc finger and BTB domain-containing protein 42 (Zbtb42).